The sequence spans 189 residues: Putative manganese efflux pump MntP (189 aa).

6 consecutive transmembrane segments (helical) span residues leucine 3 to glycine 23, leucine 41 to alanine 61, isoleucine 65 to isoleucine 85, phenylalanine 104 to glycine 124, isoleucine 132 to leucine 152, and isoleucine 167 to leucine 187.

This sequence belongs to the MntP (TC 9.B.29) family.

It localises to the cell inner membrane. Probably functions as a manganese efflux pump. The sequence is that of Putative manganese efflux pump MntP from Yersinia pseudotuberculosis serotype O:1b (strain IP 31758).